Here is a 1188-residue protein sequence, read N- to C-terminus: Oxysterol-binding protein homolog 1 (1188 aa).

ANK repeat units lie at residues 51–80 (VLHL…STTN), 96–125 (NGNT…INDC), and 196–225 (TGDT…DPFK). The PH domain occupies 330-379 (MSSCSLHLDSSEKLKFEIIGGNNGVIRWHLKGNHPIETNRWVWAIQGAIR). Position 394 is a phosphoserine (Ser394). 2 disordered regions span residues 415–546 (ATSK…GDED) and 661–692 (QKKL…QEST). Polar residues predominate over residues 424 to 433 (PHLSKSTLTQ). Positions 443-462 (TNNNNNKSNNDYDDNNNNNN) are enriched in low complexity. Residues 463–473 (NDDDDYDDDDE) show a composition bias toward acidic residues. Residues Ser490 and Ser500 each carry the phosphoserine modification. The span at 514–529 (PSDDEGYSEDDSDDDG) shows a compositional bias: acidic residues. A phosphoserine mark is found at Ser678, Ser683, and Ser691. Thr692 and Thr694 each carry phosphothreonine. Residues Ser708 and Ser712 each carry the phosphoserine modification. The FFAT motif lies at 716–722 (EFFDAEE). The interval 721–755 (EEAASDKKANDSEDLTTNKETPANAKPQEEAPEDE) is disordered. An OSBP-related domain (ORD) region spans residues 800 to 1174 (LWSVLKSMVG…YWKFNGEYWN (375 aa)). 2 residues coordinate ergosterol: Asp834 and Lys962.

It belongs to the OSBP family. Interacts with NVJ1. Interacts with the AAA ATPase AFG2; regulates OSH1 membrane association. AFG2 is required for membrane dissociation of OSH1. Interacts with SCS2.

It localises to the golgi apparatus membrane. Its subcellular location is the nucleus outer membrane. It is found in the endoplasmic reticulum membrane. The protein localises to the vacuole membrane. Its function is as follows. Lipid transport protein (LTP) involved in non-vesicular transfer of lipids between membranes. Functions in phosphoinositide-coupled directional transport of various lipids by carrying the lipid molecule in a hydrophobic pocket and transferring it between membranes through the cytosol. Involved in maintenance of intracellular sterol distribution and homeostasis. Involved in non-vesicular transport of ergosterol and PI(4)P at the NVJ. Binds sterol and PI4P in a mutually exclusive manner. May be involved in formation of PMN vesicles by altering the membrane lipid composition. This chain is Oxysterol-binding protein homolog 1, found in Saccharomyces cerevisiae (strain ATCC 204508 / S288c) (Baker's yeast).